Here is a 172-residue protein sequence, read N- to C-terminus: Myosin regulatory light chain 2, smooth muscle major isoform (172 aa).

The span at 1-16 (MSSKRAKAKTTKKRPQ) shows a compositional bias: basic residues. The segment at 1–20 (MSSKRAKAKTTKKRPQRATS) is disordered. Ser2 is subject to N-acetylserine. 3 EF-hand domains span residues 29-64 (SQIQ…MGKN), 98-133 (DPED…MGDR), and 134-169 (FTDE…GAKD). Asp42, Asn44, Asp46, and Asp53 together coordinate Ca(2+).

In terms of assembly, myosin is a hexamer of 2 heavy chains and 4 light chains.

Its function is as follows. Myosin regulatory subunit that plays an important role in regulation of both smooth muscle and nonmuscle cell contractile activity. Implicated in cytokinesis, receptor capping, and cell locomotion. This is Myosin regulatory light chain 2, smooth muscle major isoform from Gallus gallus (Chicken).